Consider the following 103-residue polypeptide: MYAVIVSGGKQHRVKEGERLKLEKIEVETGGVVEFDKVLLVANGDDVKVGAPVVEGAKVTAEVVAHGRHKKVNIIKFRRRKHHMKRMGHRQWFTEVKITGITG.

This sequence belongs to the bacterial ribosomal protein bL21 family. In terms of assembly, part of the 50S ribosomal subunit. Contacts protein L20.

Functionally, this protein binds to 23S rRNA in the presence of protein L20. This chain is Large ribosomal subunit protein bL21, found in Hahella chejuensis (strain KCTC 2396).